A 152-amino-acid polypeptide reads, in one-letter code: Probable flagellum biosynthesis repressor protein FlbT (152 aa).

The protein belongs to the FlbT family.

Functionally, has a post-transcriptional repressor function in flagellum biogenesis. Associates with the 5'-UTR of fljK mRNA and promotes its degradation. In Brucella anthropi (strain ATCC 49188 / DSM 6882 / CCUG 24695 / JCM 21032 / LMG 3331 / NBRC 15819 / NCTC 12168 / Alc 37) (Ochrobactrum anthropi), this protein is Probable flagellum biosynthesis repressor protein FlbT.